Consider the following 458-residue polypeptide: Protein amnionless (458 aa).

The N-terminal stretch at 1-19 is a signal peptide; sequence MGALGRALLWLQLCALARA. Residues 20–366 lie on the Extracellular side of the membrane; sequence AYKLWVPTTD…LGSGSRAGLA (347 aa). N35 is a glycosylation site (N-linked (GlcNAc...) asparagine). Cystine bridges form between C43-C96, C137-C213, C205-C211, C223-C249, C234-C250, and C239-C253. Residues 67-87 form an interaction with CUBN region; sequence SDMLLPRDGEFVLASGAGFGA. The VWFC domain occupies 203–254; it reads GACADPSGCVCGDAEVQPWICAALLQPLGGRCPPAACPDALRPEGQCCDLCG. A helical transmembrane segment spans residues 367–387; that stretch reads GGVAAGLLLLLLALAAGLLLL. Residues 388–458 are Cytoplasmic-facing; sequence RRAPRLRWTK…VNPLFAEAEA (71 aa). The disordered stretch occupies residues 422 to 446; the sequence is SVGPVPRTPQPPPAQQAGSSSTSRS.

Interacts (via extracellular region) with CUBN/cubilin. This gives rise to a huge complex containing one AMN chain and three CUBN chains. In terms of processing, N-glycosylated. A soluble form arises by proteolytic removal of the membrane anchor. As to expression, detected in kidney (at protein level). Detected in kidney and ileum.

The protein localises to the apical cell membrane. It localises to the cell membrane. Its subcellular location is the endosome membrane. It is found in the membrane. The protein resides in the coated pit. The protein localises to the secreted. Membrane-bound component of the endocytic receptor formed by AMN and CUBN. Required for normal CUBN glycosylation and trafficking to the cell surface. The complex formed by AMN and CUBN is required for efficient absorption of vitamin B12. Required for normal CUBN-mediated protein transport in the kidney. The protein is Protein amnionless (AMN) of Canis lupus familiaris (Dog).